The sequence spans 468 residues: Phosphatidylinositol-binding clathrin assembly protein LAP (468 aa).

One can recognise an ENTH domain in the interval 16–158 (RHSLAGQGLA…LSYRAMAFDF (143 aa)). Residues 438–468 (NAGDGTAKYDGGAGSSPFDWGATDDDGGAAQ) form a disordered region. Acidic residues predominate over residues 459 to 468 (ATDDDGGAAQ).

This sequence belongs to the PICALM/SNAP91 family. In terms of assembly, binds clathrin and phosphatidylinositol 4,5-bisphosphate. In terms of tissue distribution, in embryos, expression is seen in central and peripheral nervous systems (brain and ventral nerve cord) and Garland cells. Coexpressed with clathrin at presynaptic boutons of neuromuscular junctions.

It is found in the membrane. It localises to the clathrin-coated pit. The protein resides in the golgi apparatus. The protein localises to the cytoplasmic vesicle. Its subcellular location is the clathrin-coated vesicle. Assembly protein recruiting clathrin and adaptor protein complex 2 (AP2) to cell membranes at sites of coated-pit formation and clathrin-vesicle assembly. May be required to determine the amount of membrane to be recycled, possibly by regulating the size of the clathrin cage. Involved in AP2-dependent clathrin-mediated endocytosis at the neuromuscular junction. The polypeptide is Phosphatidylinositol-binding clathrin assembly protein LAP (lap) (Drosophila melanogaster (Fruit fly)).